The sequence spans 701 residues: Ephexin-1 (701 aa).

Composition is skewed to basic and acidic residues over residues 1–11 (METKNSEDQGK) and 26–48 (GPAEMRPELPPETAKETQNEEPR). Residues 1–141 (METKNSEDQG…TPEECPALTD (141 aa)) form a disordered region. Residues 1–264 (METKNSEDQG…LDILQPEETK (264 aa)) are regulatory region; modulates activity toward RHOA, RAC1 and CDC42. Positions 120–132 (ASESSSTPGNGTT) are enriched in polar residues. Tyrosine 172 is modified (phosphotyrosine). Positions 187–226 (RRQQDAEIQGNSDGSQAGEDNAEEEEEEEEEPASPPERRA) are disordered. Residues 206 to 218 (DNAEEEEEEEEEP) show a composition bias toward acidic residues. Residues 264–448 (KLQEAMFELV…EMVVKACNEG (185 aa)) form the DH domain. The PH domain occupies 480–592 (WLLKQGELQQ…WMTSLAPNRR (113 aa)). The SH3 domain maps to 603-664 (LDCPQVQCVH…PSSMTEEILN (62 aa)). The span at 679–690 (HKMEDPQRSQNK) shows a compositional bias: basic and acidic residues. The interval 679-701 (HKMEDPQRSQNKDRRKLGSRNRQ) is disordered. Residues 691–701 (DRRKLGSRNRQ) are compositionally biased toward basic residues.

As to quaternary structure, interacts with CDK5R1 and EPHA4; activated by EPHA4 through the CDK5 kinase. Post-translationally, phosphorylation by CDK5 upon EPHA4 activation by EFNA1 may regulate dendritic spine morphogenesis. Src-dependent phosphorylation at Tyr-172 upon EPHA4 activation increases the guanine exchange factor activity toward RHOA. Expressed in telencephalic neurons (at protein level). Expressed in brain, spinal cord and testis.

The protein resides in the cytoplasm. It localises to the membrane. It is found in the cell projection. The protein localises to the growth cone. In terms of biological role, acts as a guanine nucleotide exchange factor (GEF) which differentially activates the GTPases RHOA, RAC1 and CDC42. Plays a role in axon guidance regulating ephrin-induced growth cone collapse and dendritic spine morphogenesis. Upon activation by ephrin through EPHA4, the GEF activity switches toward RHOA resulting in its activation. Activated RHOA promotes cone retraction at the expense of RAC1- and CDC42-stimulated growth cone extension. This chain is Ephexin-1 (Ngef), found in Rattus norvegicus (Rat).